Here is a 617-residue protein sequence, read N- to C-terminus: Electron transfer flavoprotein-ubiquinone oxidoreductase, mitochondrial (617 aa).

The N-terminal 33 residues, 1 to 33, are a transit peptide targeting the mitochondrion; sequence MLVPLAKLSCPAYQCFHALKIKKNYLPLCATRW. Position 71–85 (71–85) interacts with FAD; that stretch reads VVIVGAGPAGLSAAV. At Lys96 the chain carries N6-acetyllysine. Residues 109–130 lie within the membrane without spanning it; it reads IGAHTLSGACLDPGAFKELFPD. N6-acetyllysine is present on residues Lys132 and Lys223. The a ubiquinone site is built by Gly305 and Gly306. Lys357 carries the post-translational modification N6-acetyllysine. An intramembrane segment occupies 428-447; that stretch reads MGLHVTEYEDNLKNSWVWKE. Ser551 bears the Phosphoserine mark. Residues Cys561, Cys586, Cys589, and Cys592 each contribute to the [4Fe-4S] cluster site. Residues 577–606 enclose the 4Fe-4S ferredoxin-type domain; that stretch reads FRLQINAQNCVHCKTCDIKDPSQNINWVVP.

It belongs to the ETF-QO/FixC family. As to quaternary structure, monomer. [4Fe-4S] cluster is required as a cofactor. The cofactor is FAD.

It is found in the mitochondrion inner membrane. The enzyme catalyses a ubiquinone + reduced [electron-transfer flavoprotein] = a ubiquinol + oxidized [electron-transfer flavoprotein] + H(+). Functionally, accepts electrons from ETF and reduces ubiquinone. This Pongo abelii (Sumatran orangutan) protein is Electron transfer flavoprotein-ubiquinone oxidoreductase, mitochondrial (ETFDH).